Here is a 433-residue protein sequence, read N- to C-terminus: Urokinase-type plasminogen activator (433 aa).

The first 20 residues, 1–20, serve as a signal peptide directing secretion; that stretch reads MRALLAHLLLCVLVVSASKG. Positions 26–62 constitute an EGF-like domain; the sequence is VPSDCGCLNGGTCMSNKYFSSIHWCNCPKKFGGQHCE. Disulfide bonds link Cys30–Cys38, Cys32–Cys50, Cys52–Cys61, Cys69–Cys150, Cys90–Cys132, and Cys121–Cys145. A binds urokinase plasminogen activator surface receptor region spans residues 33–56; sequence LNGGTCMSNKYFSSIHWCNCPKKF. Residues 69-150 form the Kringle domain; the sequence is CYEGNGHFYR…RVQECMVHNC (82 aa). A connecting peptide region spans residues 151 to 177; that stretch reads ADGKKPSSPPEELQFQCGQRTLRPRFK. Ser157 is subject to Phosphoserine. Intrachain disulfides connect Cys167-Cys298, Cys208-Cys224, Cys216-Cys287, Cys315-Cys384, Cys347-Cys363, and Cys374-Cys402. One can recognise a Peptidase S1 domain in the interval 178–426; sequence IVGGEFTTIE…FLPWIHSHTR (249 aa). Residues His223 and Asp274 each act as charge relay system in the active site. Asn324 is a glycosylation site (N-linked (GlcNAc...) asparagine). At Ser325 the chain carries Phosphoserine. Ser378 serves as the catalytic Charge relay system.

It belongs to the peptidase S1 family. Found in high and low molecular mass forms. Each consists of two chains, A and B. The high molecular mass form contains a long chain A which is cleaved to yield a short chain A. Forms heterodimer with SERPINA5. Binds LRP1B; binding is followed by internalization and degradation. Interacts with MRC2. Interacts with PLAUR. In complex with SERPINE1, interacts with PLAUR/uPAR. Interacts with SORL1 and LRP1, either alone or in complex with SERPINE1; these interactions are abolished in the presence of LRPAP1/RAP. The ternary complex composed of PLAUR-PLAU-PAI1 also interacts with SORLA. Phosphorylation of Ser-157 and Ser-325 abolishes proadhesive ability but does not interfere with receptor binding. In terms of processing, produced as an inactive single-chain protein (pro-uPA or sc-uPA), is processed into the active disulfide-linked two-chain form of PLAU/uPA by a proteolytic event mediated, at least, by TMPRSS4.

The protein localises to the secreted. It carries out the reaction Specific cleavage of Arg-|-Val bond in plasminogen to form plasmin.. With respect to regulation, inhibited by SERPINA5. Inhibited by SERPINE1. In terms of biological role, specifically cleaves the zymogen plasminogen to form the active enzyme plasmin. The polypeptide is Urokinase-type plasminogen activator (PLAU) (Papio cynocephalus (Yellow baboon)).